The sequence spans 138 residues: 1,4-dihydroxy-2-naphthoyl-CoA hydrolase (138 aa).

Asp-15 is an active-site residue.

Belongs to the 4-hydroxybenzoyl-CoA thioesterase family. DHNA-CoA hydrolase subfamily.

It catalyses the reaction 1,4-dihydroxy-2-naphthoyl-CoA + H2O = 1,4-dihydroxy-2-naphthoate + CoA + H(+). Its pathway is cofactor biosynthesis; phylloquinone biosynthesis. It participates in quinol/quinone metabolism; 1,4-dihydroxy-2-naphthoate biosynthesis; 1,4-dihydroxy-2-naphthoate from chorismate: step 7/7. Catalyzes the hydrolysis of 1,4-dihydroxy-2-naphthoyl-CoA (DHNA-CoA) to 1,4-dihydroxy-2-naphthoate (DHNA), a reaction involved in phylloquinone (vitamin K1) biosynthesis. The sequence is that of 1,4-dihydroxy-2-naphthoyl-CoA hydrolase from Trichodesmium erythraeum (strain IMS101).